The primary structure comprises 555 residues: Sulfite reductase [ferredoxin] (555 aa).

A disordered region spans residues 1–22 (MTTARPAKARNEGQWALGHREP). The segment at residues 69 to 161 (YTQREQGYDG…DVGLQTTEAC (93 aa)) is a cross-link (3'-(S-cysteinyl)-tyrosine (Tyr-Cys)). Positions 417, 423, 463, and 467 each coordinate [4Fe-4S] cluster. Cys-467 contacts siroheme.

Belongs to the nitrite and sulfite reductase 4Fe-4S domain family. In terms of assembly, monomer. The cofactor is siroheme. [4Fe-4S] cluster is required as a cofactor.

It carries out the reaction hydrogen sulfide + 6 oxidized [2Fe-2S]-[ferredoxin] + 3 H2O = sulfite + 6 reduced [2Fe-2S]-[ferredoxin] + 7 H(+). Catalyzes the reduction of sulfite to sulfide, a step in the biosynthesis of sulfur-containing amino acids and cofactors. This chain is Sulfite reductase [ferredoxin] (sir), found in Mycobacterium bovis (strain ATCC BAA-935 / AF2122/97).